Here is a 348-residue protein sequence, read N- to C-terminus: tRNA N6-adenosine threonylcarbamoyltransferase (348 aa).

Fe cation contacts are provided by histidine 115 and histidine 119. Residues 138-142 (LVSGG), aspartate 171, glycine 184, and asparagine 276 contribute to the substrate site. Aspartate 304 is a Fe cation binding site.

It belongs to the KAE1 / TsaD family. Fe(2+) serves as cofactor.

It is found in the cytoplasm. The catalysed reaction is L-threonylcarbamoyladenylate + adenosine(37) in tRNA = N(6)-L-threonylcarbamoyladenosine(37) in tRNA + AMP + H(+). Required for the formation of a threonylcarbamoyl group on adenosine at position 37 (t(6)A37) in tRNAs that read codons beginning with adenine. Is involved in the transfer of the threonylcarbamoyl moiety of threonylcarbamoyl-AMP (TC-AMP) to the N6 group of A37, together with TsaE and TsaB. TsaD likely plays a direct catalytic role in this reaction. The chain is tRNA N6-adenosine threonylcarbamoyltransferase from Xylella fastidiosa (strain 9a5c).